Here is a 369-residue protein sequence, read N- to C-terminus: MSSRGGKKKSTKTSRSAKAGVIFPVGRMLRYIKKGHPKYRIGVGAPVYMAAVLEYLTAEILELAGNAARDNKKGRVTPRHILLAVANDEELNQLLKGVTIASGGVLPNIHPELLAKKRGSKGKLEAIITPPPAKKAKSPSQKKPVSKKAGGKKGARKSKKKQGEVSKAASADSTTEGTPADGFTVLSTKSLFLGQKLQVVQADIASIDSDAVVHPTNTDFYIGGEVGNTLEKKGGKEFVEAVLELRKKNGPLEVAGAAVSAGHGLPAKFVIHCNSPVWGADKCEELLEKTVKNCLALADDKKLKSIAFPSIGSGRNGFPKQTAAQLILKAISSYFVSTMSSSIKTVYFVLFDSESIGIYVQEMAKLDAN.

A Histone H2A domain is found at 2-117 (SSRGGKKKST…NIHPELLAKK (116 aa)). N6-lactoyllysine; alternate is present on residues K7 and K9. Position 18 is an N6-methyllysine (K18). The residue at position 116 (K116) is an N6-acetyllysine; alternate. K116 is covalently cross-linked (Glycyl lysine isopeptide (Lys-Gly) (interchain with G-Cter in ubiquitin); alternate). K117 is covalently cross-linked (Glycyl lysine isopeptide (Lys-Gly) (interchain with G-Cter in ubiquitin)). K123 is subject to N6-acetyllysine; alternate. K123 bears the N6,N6-dimethyllysine; alternate mark. K123 participates in a covalent cross-link: Glycyl lysine isopeptide (Lys-Gly) (interchain with G-Cter in SUMO2); alternate. The disordered stretch occupies residues 128 to 180 (ITPPPAKKAKSPSQKKPVSKKAGGKKGARKSKKKQGEVSKAASADSTTEGTPA). T129 is subject to Phosphothreonine. A compositionally biased stretch (basic residues) spans 144–160 (PVSKKAGGKKGARKSKK). K167 participates in a covalent cross-link: Glycyl lysine isopeptide (Lys-Gly) (interchain with G-Cter in SUMO2). A phosphoserine mark is found at S170 and S173. T178 carries the post-translational modification Phosphothreonine. The 184-residue stretch at 184–367 (TVLSTKSLFL…IYVQEMAKLD (184 aa)) folds into the Macro domain. K189 participates in a covalent cross-link: Glycyl lysine isopeptide (Lys-Gly) (interchain with G-Cter in SUMO2). A glycoprotein is bound by residues D203, I204, V226, S275, G312, S313, G314, and N316. A Glycyl lysine isopeptide (Lys-Gly) (interchain with G-Cter in SUMO2) cross-link involves residue K320.

It belongs to the histone H2A family. The nucleosome is a histone octamer containing two molecules each of H2A, H2B, H3 and H4 assembled in one H3-H4 heterotetramer and two H2A-H2B heterodimers. Interacts with HDAC1 and HDAC2. Interacts with SPOP. Part of a complex consisting of MACROH2A1, CUL3 and SPOP. As to quaternary structure, interacts with PARP1. Monoubiquitinated at either Lys-116 or Lys-117. May also be polyubiquitinated. Ubiquitination is mediated by the CUL3/SPOP E3 complex and does not promote proteasomal degradation. Instead, it is required for enrichment in inactive X chromosome chromatin. In terms of tissue distribution, widely expressed.

It localises to the nucleus. The protein resides in the chromosome. In terms of biological role, variant histone H2A which replaces conventional H2A in a subset of nucleosomes where it represses transcription. Nucleosomes wrap and compact DNA into chromatin, limiting DNA accessibility to the cellular machineries which require DNA as a template. Histones thereby play a central role in transcription regulation, DNA repair, DNA replication and chromosomal stability. DNA accessibility is regulated via a complex set of post-translational modifications of histones, also called histone code, and nucleosome remodeling. Involved in stable X chromosome inactivation. Inhibits the binding of transcription factors, including NF-kappa-B, and interferes with the activity of remodeling SWI/SNF complexes. Inhibits histone acetylation by EP300 and recruits class I HDACs, which induces a hypoacetylated state of chromatin. Its function is as follows. Isoform that specifically binds poly-ADP-ribose and O-acetyl-ADP-ribose and plays a key role in NAD(+) metabolism. Able to bind to the ends of poly-ADP-ribose chains created by PARP1 and cap them. This prevents PARP1 from further addition of ADP-ribose and thus limits the consumption of nuclear NAD(+), allowing the cell to maintain proper NAD(+) levels in both the nucleus and the mitochondria to promote proper mitochondrial respiration. Increases the expression of genes involved in redox metabolism, including SOD3. In contrast to isoform 1, does not bind poly-ADP-ribose. Represses SOD3 gene expression. In Homo sapiens (Human), this protein is Core histone macro-H2A.1.